We begin with the raw amino-acid sequence, 272 residues long: Dioscorin DB3L (272 aa).

Residues 1 to 25 form the signal peptide; it reads MSSSTLFHLFLLSSLLFSCLSNARP. The region spanning 28–263 is the Alpha-carbonic anhydrase domain; the sequence is DDFSYIEGSP…LKFRTIFFYP (236 aa). C53 and C213 are oxidised to a cystine.

It belongs to the alpha-class carbonic anhydrase family. Homodimer; disulfide-linked. In terms of processing, not glycosylated. As to expression, expressed in tuber (at protein level).

Loss of hemagglutinating activity by EDTA treatment. The activity is fully recovered by the addition of 5 mM Ca(2+) ions, but not with Mg(2+) and Mn 2(+). Hemagglutination activity is inhibited by maltose and its derivatives, with maltopentaose and maltohexaose being the best inhibitors followed by maltose and iso maltose. Not inhibited by glycoproteins. Maltose-binding lectin. No affinity is detected toward glucose. Has hemagglutinating activity against rabbit erythrocytes at 3.9 ug/ml. No carbonate dehydratase or trypsin inhibitor activity detected by measuring the hydrolysis of 4-nitrophenyl acetate or the inhibition of bovine trypsin-catalyzed hydrolysis of N-benzoyl-L-arginine ethyl ester, respectively. The sequence is that of Dioscorin DB3L from Dioscorea polystachya (Chinese yam).